The sequence spans 279 residues: Ethanolamine utilization protein EutJ (279 aa).

It belongs to the EutJ family.

Its pathway is amine and polyamine degradation; ethanolamine degradation. Functionally, may protect ethanolamine ammonia-lyase (EAL, eutB-eutC) from inhibition, may function in assembling the bacterial microcompartment and/or in refolding EAL, suggesting it may have chaperone activity. Overexpression of eutJ and eutS in E.coli leads to multiple BMC-like structures; eutS expression alone leads to 1 BMC-like structure per cell. Its function is as follows. Expression of the eut operon allows this bacteria to use ethanolamine (EA) as a carbon, nitrogen and energy source. It relies on cobalamin (vitamin B12) both as a cofactor for the ethanolamine ammonia-lyase (EAL) activity and to induce the operon. EA enhances bacterial survival in macrophages in a concentration-dependent manner, suggesting it is an important nutrient during infection. The polypeptide is Ethanolamine utilization protein EutJ (Salmonella typhimurium (strain LT2 / SGSC1412 / ATCC 700720)).